The sequence spans 217 residues: Magnetosome protein MamA (217 aa).

TPR repeat units lie at residues 12-44, 46-79, 80-113, 114-147, 148-181, and 182-215; these read VTLY…NDDI, QVYY…DAFD, VEVA…APDN, IKVA…NPVN, FNVR…RPNE, and GKVH…DERS. Residues 41–112 are N-terminal domain; it reads NDDIRQVYYR…LERSIADAPD (72 aa). The segment at 113 to 217 is C-terminal domain; the sequence is NIKVATVLGL…ANELDERSAV (105 aa).

This sequence belongs to the magnetosome MamA family. Forms round, 20 nm diameter complexes with a central cavity. Probably binds MamC. Interacts with full-length Mms6.

The protein localises to the magnetosome membrane. In terms of biological role, probably forms a large homooligomer on which other magnetosome subunits assemble. Required for formation of functional magnetosomes from pre-existing vesicles. In Magnetospirillum gryphiswaldense (strain DSM 6361 / JCM 21280 / NBRC 15271 / MSR-1), this protein is Magnetosome protein MamA.